The sequence spans 363 residues: MSDIIKLKHVRKEYDDGFVALKDINLTIESGKFYSLLGPSGSGKTTILRIIAGFSEPTSGQVFFDGQDITNLDAAKRKINTVFQNYALFPHMNVFENVAFGLQIKKKDKQEIKLAVKEALHMVQLDGFANREISELSGGQQQRVAIARAIVNQPKVLLLDESLSALDKRLRKDMQFELREIQKKLGITFIFVTHDQEEALAMSDEIFVLNEGKIQQSGSPVDIYDEPVNDFVARFIGDSNILSGRMIKDYEVEFGNHRFECADAGIKPGEKVEVVLRPEDLDITDIEHGKLRVVVESQLFLGDHFEIKAIDSDENEWLIHSTNPTKIGKEVGVYFDPEDIHVMRFGESEAEFDKRLEAYEGEE.

Positions Ile5 to Ile236 constitute an ABC transporter domain. ATP is bound at residue Gly38–Thr45.

The protein belongs to the ABC transporter superfamily. Spermidine/putrescine importer (TC 3.A.1.11.1) family. In terms of assembly, the complex is composed of two ATP-binding proteins (PotA), two transmembrane proteins (PotB and PotC) and a solute-binding protein (PotD).

Its subcellular location is the cell membrane. The enzyme catalyses ATP + H2O + polyamine-[polyamine-binding protein]Side 1 = ADP + phosphate + polyamineSide 2 + [polyamine-binding protein]Side 1.. Part of the ABC transporter complex PotABCD involved in spermidine/putrescine import. Responsible for energy coupling to the transport system. This Lactobacillus johnsonii (strain CNCM I-12250 / La1 / NCC 533) protein is Spermidine/putrescine import ATP-binding protein PotA.